Consider the following 72-residue polypeptide: ATP synthase subunit c (72 aa).

A run of 2 helical transmembrane segments spans residues M1–I21 and M48–I68.

It belongs to the ATPase C chain family. In terms of assembly, F-type ATPases have 2 components, F(1) - the catalytic core - and F(0) - the membrane proton channel. F(1) has five subunits: alpha(3), beta(3), gamma(1), delta(1), epsilon(1). F(0) has three main subunits: a(1), b(2) and c(10-14). The alpha and beta chains form an alternating ring which encloses part of the gamma chain. F(1) is attached to F(0) by a central stalk formed by the gamma and epsilon chains, while a peripheral stalk is formed by the delta and b chains.

It is found in the cell membrane. F(1)F(0) ATP synthase produces ATP from ADP in the presence of a proton or sodium gradient. F-type ATPases consist of two structural domains, F(1) containing the extramembraneous catalytic core and F(0) containing the membrane proton channel, linked together by a central stalk and a peripheral stalk. During catalysis, ATP synthesis in the catalytic domain of F(1) is coupled via a rotary mechanism of the central stalk subunits to proton translocation. In terms of biological role, key component of the F(0) channel; it plays a direct role in translocation across the membrane. A homomeric c-ring of between 10-14 subunits forms the central stalk rotor element with the F(1) delta and epsilon subunits. The polypeptide is ATP synthase subunit c (Bacillus caldotenax).